The chain runs to 100 residues: Urease subunit gamma (100 aa).

This sequence belongs to the urease gamma subunit family. As to quaternary structure, heterotrimer of UreA (gamma), UreB (beta) and UreC (alpha) subunits. Three heterotrimers associate to form the active enzyme.

It localises to the cytoplasm. It carries out the reaction urea + 2 H2O + H(+) = hydrogencarbonate + 2 NH4(+). Its pathway is nitrogen metabolism; urea degradation; CO(2) and NH(3) from urea (urease route): step 1/1. In Paracidovorax citrulli (strain AAC00-1) (Acidovorax citrulli), this protein is Urease subunit gamma.